We begin with the raw amino-acid sequence, 308 residues long: tRNA pseudouridine synthase B (308 aa).

Aspartate 37 acts as the Nucleophile in catalysis.

The protein belongs to the pseudouridine synthase TruB family. Type 1 subfamily.

It carries out the reaction uridine(55) in tRNA = pseudouridine(55) in tRNA. Its function is as follows. Responsible for synthesis of pseudouridine from uracil-55 in the psi GC loop of transfer RNAs. The sequence is that of tRNA pseudouridine synthase B from Deinococcus radiodurans (strain ATCC 13939 / DSM 20539 / JCM 16871 / CCUG 27074 / LMG 4051 / NBRC 15346 / NCIMB 9279 / VKM B-1422 / R1).